A 107-amino-acid polypeptide reads, in one-letter code: Prokineticin-2 (107 aa).

An N-terminal signal peptide occupies residues 1 to 26 (MEDPRCAPLLLLLLLPLLLTPPAGDA). 5 cysteine pairs are disulfide-bonded: cysteine 33-cysteine 45, cysteine 39-cysteine 57, cysteine 44-cysteine 85, cysteine 67-cysteine 93, and cysteine 87-cysteine 103.

This sequence belongs to the AVIT (prokineticin) family. As to expression, expressed at high levels in testis and at lower levels in brain, lung, ovary, spleen, thymus and uterus.

The protein localises to the secreted. Functionally, may function as an output molecule from the suprachiasmatic nucleus (SCN) that transmits behavioral circadian rhythm. May also function locally within the SCN to synchronize output. Potently contracts gastrointestinal (GI) smooth muscle. In Rattus norvegicus (Rat), this protein is Prokineticin-2 (Prok2).